The following is a 276-amino-acid chain: Ribonuclease 3 (276 aa).

Positions 1–29 (MRGTVSVPKKAEDAKADPPAKKKADTQAS) are disordered. The span at 9-25 (KKAEDAKADPPAKKKAD) shows a compositional bias: basic and acidic residues. One can recognise an RNase III domain in the interval 31-157 (HTLLEGRLGY…VIGAVYLDQG (127 aa)). Glutamate 70 contributes to the Mg(2+) binding site. Residue aspartate 74 is part of the active site. The Mg(2+) site is built by aspartate 143 and glutamate 146. Residue glutamate 146 is part of the active site. The 69-residue stretch at 184–252 (DWKTSLQELT…AESAWRSIRA (69 aa)) folds into the DRBM domain. A disordered region spans residues 227–276 (YGTGTGRSKKEAEQQAAESAWRSIRAAADERAKATADAVDADPDEASASA). The segment covering 265 to 276 (VDADPDEASASA) has biased composition (acidic residues).

This sequence belongs to the ribonuclease III family. In terms of assembly, homodimer. The cofactor is Mg(2+).

It is found in the cytoplasm. The catalysed reaction is Endonucleolytic cleavage to 5'-phosphomonoester.. Its function is as follows. Digests double-stranded RNA. Involved in the processing of primary rRNA transcript to yield the immediate precursors to the large and small rRNAs (23S and 16S). Also processes some mRNAs, and tRNAs when they are encoded in the rRNA operon. May modulate key aspects of gene expression as its absence has extensive effects on the abundance of about 200 different transcripts. Probably processes pre-crRNA and tracrRNA of type II CRISPR loci if present in the organism. This Streptomyces coelicolor (strain ATCC BAA-471 / A3(2) / M145) protein is Ribonuclease 3 (rnc).